A 319-amino-acid polypeptide reads, in one-letter code: F-box only protein 8 (319 aa).

Positions 68–111 constitute an F-box domain; that stretch reads FINLEMLPPELSFTILSYLNATDLCLASCVWQDLANDELLWQGL. Residues 146–276 enclose the SEC7 domain; it reads FNANPDEGVN…LILLSIDLTS (131 aa).

Its function is as follows. May promote guanine-nucleotide exchange on an ARF. Promotes the activation of ARF through replacement of GDP with GTP (Potential). The protein is F-box only protein 8 (FBXO8) of Bos taurus (Bovine).